A 37-amino-acid chain; its full sequence is Large ribosomal subunit protein bL36 (37 aa).

This sequence belongs to the bacterial ribosomal protein bL36 family.

In Mycobacterium ulcerans (strain Agy99), this protein is Large ribosomal subunit protein bL36.